The primary structure comprises 234 residues: RNA chaperone ProQ (234 aa).

Residues 104–130 show a composition bias toward basic and acidic residues; sequence LEEAKARVQAQRDARKREAAENGEKRE. The disordered stretch occupies residues 104-186; that stretch reads LEEAKARVQA…QRSTPVTSLE (83 aa). The segment covering 131–142 has biased composition (basic residues); sequence PRRPRPAGKKPT. Basic and acidic residues-rich tracts occupy residues 143–156 and 163–176; these read ARRD…EVRK and TSER…ETTE. The span at 177–186 shows a compositional bias: polar residues; the sequence is QRSTPVTSLE.

The protein belongs to the ProQ family.

The protein resides in the cytoplasm. Its function is as follows. RNA chaperone with significant RNA binding, RNA strand exchange and RNA duplexing activities. May regulate ProP activity through an RNA-based, post-transcriptional mechanism. The sequence is that of RNA chaperone ProQ from Edwardsiella ictaluri (strain 93-146).